Consider the following 1292-residue polypeptide: SH3 and multiple ankyrin repeat domains protein 2 (1292 aa).

A PDZ domain is found at 56 to 150 (TVVLQKKDNE…HLVLKVVTVT (95 aa)). Disordered stretches follow at residues 155-176 (PDDT…TALS), 331-393 (MPDA…SDNV), 488-508 (IKEP…METD), 604-656 (SSNA…KLLD), 671-743 (ALKE…EKKN), 774-811 (LTES…SECG), and 938-968 (IEEV…TLSS). The segment covering 338-354 (IPPPPATLPPSPPPPSP) has biased composition (pro residues). Positions 355-365 (SSFNSPKSPAP) are enriched in low complexity. The segment covering 375 to 384 (FTQNSGTKSP) has biased composition (polar residues). The segment covering 492-504 (STSSSGKSSQGSS) has biased composition (low complexity). Polar residues predominate over residues 604 to 623 (SSNAFTNNDSSHQGDVSNAR). The segment covering 719–743 (KRQETESKHEPDSSKEEKRQGEKKN) has biased composition (basic and acidic residues). Residues 941 to 952 (VDSRSGSDHHLE) are compositionally biased toward basic and acidic residues. Low complexity predominate over residues 953 to 968 (TTSTISTVSSISTLSS). Residues 991–997 (PPVPPKP) carry the SH3-binding motif. The disordered stretch occupies residues 1087-1115 (TKTGEGLDSPTGMKTASLSTRGTDALSTV). Residues 1098–1115 (GMKTASLSTRGTDALSTV) are compositionally biased toward polar residues. Residues 1229–1292 (WTKQDVAEWL…ERALKQLLDR (64 aa)) form the SAM domain.

The protein belongs to the SHANK family.

It localises to the cytoplasm. The protein localises to the synapse. The protein resides in the postsynaptic density. In terms of biological role, seems to be an adapter protein in the postsynaptic density (PSD) of excitatory synapses that interconnects receptors of the postsynaptic membrane including NMDA-type and metabotropic glutamate receptors, and the actin-based cytoskeleton. May play a role in the structural and functional organization of the dendritic spine and synaptic junction. This Xenopus laevis (African clawed frog) protein is SH3 and multiple ankyrin repeat domains protein 2 (shank2).